Consider the following 382-residue polypeptide: Heme A synthase (382 aa).

The next 8 membrane-spanning stretches (helical) occupy residues 25-45, 112-132, 141-161, 176-196, 211-231, 270-290, 303-323, and 327-347; these read GAVR…VAVG, LLGR…WARG, GLLG…IMVA, LALH…LAAG, VVAC…GLVA, LALV…VAIA, AAAG…GLGI, and LLHV…AVLI. Residue His-277 participates in heme binding. A heme-binding site is contributed by His-338.

It belongs to the COX15/CtaA family. Type 2 subfamily. In terms of assembly, interacts with CtaB. Heme b is required as a cofactor.

The protein resides in the cell membrane. It catalyses the reaction Fe(II)-heme o + 2 A + H2O = Fe(II)-heme a + 2 AH2. Its pathway is porphyrin-containing compound metabolism; heme A biosynthesis; heme A from heme O: step 1/1. Catalyzes the conversion of heme O to heme A by two successive hydroxylations of the methyl group at C8. The first hydroxylation forms heme I, the second hydroxylation results in an unstable dihydroxymethyl group, which spontaneously dehydrates, resulting in the formyl group of heme A. The sequence is that of Heme A synthase from Methylorubrum extorquens (strain CM4 / NCIMB 13688) (Methylobacterium extorquens).